The following is a 568-amino-acid chain: Urease subunit alpha (568 aa).

The Urease domain occupies 130–568; the sequence is GGIDTHIHFI…LPMAQRYFLF (439 aa). The Ni(2+) site is built by His135, His137, and Lys218. At Lys218 the chain carries N6-carboxylysine. Residue His220 coordinates substrate. Residues His247 and His273 each coordinate Ni(2+). His321 functions as the Proton donor in the catalytic mechanism. Asp361 is a binding site for Ni(2+).

It belongs to the metallo-dependent hydrolases superfamily. Urease alpha subunit family. In terms of assembly, heterotrimer of UreA (gamma), UreB (beta) and UreC (alpha) subunits. Three heterotrimers associate to form the active enzyme. Ni cation serves as cofactor. Carboxylation allows a single lysine to coordinate two nickel ions.

The protein localises to the cytoplasm. The enzyme catalyses urea + 2 H2O + H(+) = hydrogencarbonate + 2 NH4(+). It functions in the pathway nitrogen metabolism; urea degradation; CO(2) and NH(3) from urea (urease route): step 1/1. The chain is Urease subunit alpha from Burkholderia pseudomallei (strain 668).